Here is a 4493-residue protein sequence, read N- to C-terminus: Mucin-17 (4493 aa).

A signal peptide spans 1–25; the sequence is MPRPGTMALCLLTLVLSLLPPQAAA. Over 26–4393 the chain is Extracellular; it reads EQDLSVNRAV…QGTQKSLVYG (4368 aa). A compositionally biased stretch (polar residues) spans 88–105; the sequence is NPEMTSIESSVTSDTPGV. Disordered stretches follow at residues 88-159, 188-223, 248-277, and 306-344; these read NPEM…SISS, LTTS…SMPA, TISA…STPL, and VITS…ASTM. Positions 106–146 are enriched in low complexity; that stretch reads SSTRMTPTESRTTSESTSDSTTLFPSSTEDTSSPTTPEGTD. The segment covering 148-159 has biased composition (polar residues); it reads PMSTPSEESISS. A run of 57 repeats spans residues 185–245, 246–300, 301–361, 362–418, 420–477, 479–538, 539–597, 598–654, 656–715, 716–774, 775–831, 833–892, 893–951, 952–1010, 1011–1069, 1070–1121, 1122–1187, 1188–1246, 1247–1305, 1306–1364, 1365–1423, 1424–1482, 1483–1541, 1542–1600, 1601–1656, 1658–1717, 1718–1776, 1777–1835, 1836–1895, 1896–1951, 1953–2012, 2013–2071, 2072–2127, 2129–2188, 2189–2247, 2248–2306, 2307–2365, 2366–2424, 2425–2483, 2484–2540, 2542–2601, 2602–2653, 2654–2719, 2720–2770, 2772–2837, 2838–2896, 2897–2955, 2956–3014, 3015–3073, 3074–3132, 3133–3191, 3192–3247, 3249–3308, 3309–3367, 3368–3426, 3427–3485, and 3486–3544. Residues 185–3727 form a 59 X approximate tandem repeats region; the sequence is STPLTTSTQA…SVVTSTPVTT (3543 aa). Low complexity predominate over residues 188–210; it reads LTTSTQASSSPTTPESTTIPKST. Positions 211 to 223 are enriched in polar residues; the sequence is NSEGSTPLTSMPA. The segment covering 308 to 323 has biased composition (low complexity); it reads TSTEASSSPTTAEGTS. The segment covering 324-344 has biased composition (polar residues); the sequence is IPTSTYTEGSTPLTSTPASTM. A compositionally biased stretch (low complexity) spans 425–441; that stretch reads TTASEASSSPTTAEDTS. 6 disordered regions span residues 425-629, 644-868, 886-1104, 1116-1163, 1175-1279, and 1296-1338; these read TTAS…ERGT, SEAS…TPLT, STTP…TPLT, SEAS…TPLA, SEAN…GSTL, and STLL…GRTP. Over residues 442–483 the composition is skewed to polar residues; that stretch reads IATSTPSEGSTPLTSMPVSTTPVASSEASNLSTTPVDSKTQV. N-linked (GlcNAc...) asparagine glycosylation occurs at N471. Positions 484–497 are enriched in low complexity; it reads TTSTEASSSPPTAE. The span at 498-528 shows a compositional bias: polar residues; the sequence is VNSMPTSTPSEGSTPLTSMSVSTMPVASSEA. Low complexity-rich tracts occupy residues 529 to 573 and 584 to 618; these read STLS…TPLT and SSEA…EGTS. Composition is skewed to polar residues over residues 619 to 629 and 644 to 660; these read MPTSTYSERGT and SEAS…NTPV. The span at 661–677 shows a compositional bias: low complexity; sequence TTSTEATSSSTTAEGTS. Positions 678 to 705 are enriched in polar residues; that stretch reads MPTSTYTEGSTPLTSMPVNTTLVASSEA. Residue N696 is glycosylated (N-linked (GlcNAc...) asparagine). Positions 706-733 are enriched in low complexity; the sequence is STLSTTPVDTSTPVTTSTEASSSPTTAD. Polar residues predominate over residues 737 to 754; sequence MPTSTPSEGSTPLTSMPV. Residues 755–776 show a composition bias toward low complexity; the sequence is SKTLLTSSEASTLSTTPLDTST. Residues 777-832 are compositionally biased toward polar residues; it reads HITTSTEASCSPTTTEGTSMPISTPSEGSPLLTSIPVSITPVTSPEASTLSTTPVD. Residues 833-849 are compositionally biased toward low complexity; that stretch reads SNSPVTTSTEVSSSPTP. Polar residues predominate over residues 854 to 868; the sequence is SMPTSTYSEGRTPLT. A compositionally biased stretch (low complexity) spans 886 to 900; the sequence is STTPVDTSTPVTNST. The N-linked (GlcNAc...) asparagine glycan is linked to N898. Positions 901–944 are enriched in polar residues; it reads EARSSPTTSEGTSMPTSTPGEGSTPLTSMPDSTTPVVSSEARTL. Positions 945 to 972 are enriched in low complexity; the sequence is SATPVDTSTPVTTSTEATSSPTTAEGTS. Positions 973 to 1011 are enriched in polar residues; it reads IPTSTPSEGTTPLTSTPVSHTLVANSEASTLSTTPVDSN. A compositionally biased stretch (low complexity) spans 1012–1021; sequence TPLTTSTEAS. Residues 1029–1062 show a composition bias toward polar residues; that stretch reads GTSMPTSTPSEGSTPLTRMPVSTTMVASSETSTL. The segment covering 1063 to 1090 has biased composition (low complexity); it reads STTPADTSTPVTTYSQASSSSTTADGTS. 2 stretches are compositionally biased toward polar residues: residues 1091 to 1104 and 1116 to 1132; these read MPTS…TPLT and SEAS…SIPV. A compositionally biased stretch (low complexity) spans 1133–1149; the sequence is TTSTEASSSPTTAEGTS. Polar residues-rich tracts occupy residues 1175 to 1198 and 1205 to 1222; these read SEAN…TEAS and EVTS…TPLT. Positions 1237 to 1279 are enriched in low complexity; the sequence is STLSTSPVDTSTPVTTSAETSSSPTTAEGTSLPTSTTSEGSTL. Composition is skewed to polar residues over residues 1310–1320 and 1326–1338; these read VTSNEVSSSPT and SMPT…GRTP. Residue N1345 is glycosylated (N-linked (GlcNAc...) asparagine). Polar residues predominate over residues 1360–1394; that stretch reads TPVDNSTPVTTSTEACSSPTTSEGTSMPNSNPSEG. Disordered regions lie at residues 1360–1516, 1537–1575, 1590–1930, 1947–2163, 2177–2281, 2295–2501, 2524–2630, 2647–2693, 2709–2751, 2765–2853, 2879–2925, 2942–3167, 3182–3577, 3589–3635, 3667–3701, 3785–3812, 3829–3849, 3892–3914, 3965–3988, and 4008–4129; these read TPVD…STAL, TPAV…STPL, ANTL…PLTS, STTL…RTPL, AIST…TTPL, EVST…TTAE, TTPV…TPSE, SSEA…RSTP, ASTL…DGST, SSEA…SPTT, TPVA…TPSE, GSEA…TPLT, STLS…GSSS, TSSE…EVST, ITST…TMPV, MTTA…TSER, PSEA…LLTS, ASIA…DTAS, VITS…FSTT, and STAP…TPTV. Low complexity-rich tracts occupy residues 1395-1415 and 1423-1442; these read TTPL…EAST and TSTP…TAEG. The span at 1461 to 1483 shows a compositional bias: polar residues; that stretch reads PVSNTPVANSEASTLSTTPVDSN. A compositionally biased stretch (low complexity) spans 1484–1499; that stretch reads SPVVTSTAVSSSPTPA. Residues 1504 to 1516 are compositionally biased toward polar residues; that stretch reads IAISTPSEGSTAL. The segment covering 1537–1547 has biased composition (low complexity); it reads TPAVTSTPVTT. 2 stretches are compositionally biased toward polar residues: residues 1548-1575 and 1590-1604; these read YSQA…STPL and ANTL…KTQV. A compositionally biased stretch (low complexity) spans 1605 to 1620; the sequence is TASTEASSSTTAEGSS. Polar residues-rich tracts occupy residues 1621 to 1673 and 1679 to 1775; these read MTIS…SSPT and SMPT…TPID. Low complexity predominate over residues 1776-1797; the sequence is TSTPVTTSTEATSSPTTAEGTS. Positions 1798 to 1836 are enriched in polar residues; sequence IPTSTLSEGMTPLTSTPVSHTLVANSEASTLSTTPVDSN. Over residues 1837 to 1852 the composition is skewed to low complexity; that stretch reads SPVVTSTAVSSSPTPA. Over residues 1856–1883 the composition is skewed to polar residues; the sequence is SIATSTPSEGSTALTSIPVSTTTVASSE. Over residues 1884-1900 the composition is skewed to low complexity; sequence TNTLSTTPAVTSTPVTT. 2 stretches are compositionally biased toward polar residues: residues 1901–1921 and 1947–1976; these read YAQV…TSTP and STTL…TSMP. Residues 1984 to 2033 show a composition bias toward low complexity; that stretch reads STPLTSMPLSTTLVVSSEASTLSTTPVDTSTPATTSTEGSSSPTTAGGTS. 2 stretches are compositionally biased toward polar residues: residues 2034–2043 and 2051–2077; these read IQTSTPSERT and VSTT…QVTN. N2077 carries N-linked (GlcNAc...) asparagine glycosylation. Over residues 2078-2091 the composition is skewed to low complexity; sequence STEASSSATAEGSS. Polar residues predominate over residues 2092–2156; sequence MTISAPSEGS…EGTSMQTSTY (65 aa). Residues 2177–2196 show a composition bias toward low complexity; that stretch reads AISTLSTTPVDTSTPVTNST. N2194 is a glycosylation site (N-linked (GlcNAc...) asparagine). The span at 2197 to 2240 shows a compositional bias: polar residues; sequence EARSSPTTSEGTSMPTSTPSEGSTPFTSMPVSTMPVVTSEASTL. The segment covering 2241 to 2268 has biased composition (low complexity); that stretch reads SATPVDTSTPVTTSTEATSSPTTAEGTS. Composition is skewed to polar residues over residues 2269–2281 and 2295–2307; these read IPTS…TTPL and EVST…VDSN. Over residues 2308-2317 the composition is skewed to low complexity; the sequence is TPFTTSTEAS. Residues 2325–2358 are compositionally biased toward polar residues; it reads GTSMPTSTSSEGNTPLTRMPVSTTMVASFETSTL. The span at 2359–2371 shows a compositional bias: low complexity; that stretch reads STTPADTSTPVTT. Positions 2372–2395 are enriched in polar residues; sequence YSQAGSSPTTADDTSMPTSTYSEG. 2 stretches are compositionally biased toward low complexity: residues 2396–2445 and 2462–2499; these read STPL…EGTS and PVST…SPTT. Polar residues predominate over residues 2524–2547; that stretch reads TTPVASPEASTLSTTPVDSNSPVV. Positions 2548 to 2563 are enriched in low complexity; that stretch reads TSTEISSSATSAEGTS. Over residues 2564-2576 the composition is skewed to polar residues; that stretch reads MPTSTYSEGSTPL. Positions 2586–2617 are enriched in low complexity; that stretch reads LASSEASTLSTTPVDTSIPVTTSTETSSSPTT. Polar residues predominate over residues 2618 to 2628; that stretch reads AKDTSMPISTP. Over residues 2654-2681 the composition is skewed to low complexity; sequence STTPVDTRTLVTTSTGTSSSPTTAEGSS. The span at 2682 to 2693 shows a compositional bias: polar residues; sequence MPTSTPGERSTP. Residues 2710 to 2740 show a composition bias toward low complexity; it reads STLSTTPVDTSTPVTTSAEASSSPTTAEGTS. Over residues 2741-2751 the composition is skewed to polar residues; that stretch reads MRISTPSDGST. Low complexity-rich tracts occupy residues 2765-2816 and 2829-2853; these read SSEA…TSMP and TLST…SPTT. Positions 2879–2900 are enriched in polar residues; the sequence is TPVASSEASTLSTTPVDTSIPV. 2 stretches are compositionally biased toward low complexity: residues 2901–2917 and 2950–2976; these read TTST…EGTS and TTPV…EGTS. A compositionally biased stretch (polar residues) spans 2988 to 3009; sequence PLTSMSVSTMPVASSEASTLSR. Residues 3010-3031 are compositionally biased toward low complexity; the sequence is TPADTSTPVTTSTEASSSPTTA. A compositionally biased stretch (polar residues) spans 3037–3057; the sequence is PISTPSEGSTPLTSIPVSTTP. Composition is skewed to low complexity over residues 3073-3089 and 3104-3140; these read SNSP…SPTP and STPL…TTST. Residues 3141–3166 are compositionally biased toward polar residues; the sequence is EAHSSPTTSEGTSMPTSTPSEGSTPL. Over residues 3185–3211 the composition is skewed to low complexity; the sequence is SATPVDTSTPVTTSTEATSSTTAEGTS. Residues 3212-3253 show a composition bias toward polar residues; it reads IPTSTPSEGMTPLTSVPVSNTPVASSEASILSTTPVDSNTPL. A compositionally biased stretch (low complexity) spans 3254-3267; it reads TTSTEASSSPPTAE. The span at 3268 to 3288 shows a compositional bias: polar residues; the sequence is GTSMPTSTPSEGSTPLTSMPV. The span at 3289–3314 shows a compositional bias: low complexity; it reads STTTVASSETSTLSTTPADTSTPVTT. The segment covering 3329–3357 has biased composition (polar residues); that stretch reads SMPTSTYSEGSTPLTNMSFSTTPVVSSEA. N-linked (GlcNAc...) asparagine glycosylation occurs at N3344. The segment covering 3358–3375 has biased composition (low complexity); it reads STLSTTPVDTSTPVTTST. Over residues 3376 to 3401 the composition is skewed to polar residues; that stretch reads EASLSPTTAEGTSIPTSSPSEGTTPL. Over residues 3405 to 3414 the composition is skewed to low complexity; sequence PVSTTPVVSS. 2 stretches are compositionally biased toward polar residues: residues 3415-3441 and 3447-3475; these read EVNT…SSPT and SLPT…SSEA. Residues 3476 to 3501 are compositionally biased toward low complexity; it reads STLSTTPVDTSTPVTTSSPTNSSPTT. 2 stretches are compositionally biased toward polar residues: residues 3502–3549 and 3558–3571; these read AEVT…TFVT and PATL…MSTP. Low complexity predominate over residues 3589–3616; the sequence is TSSEASTPSTPSVDRSTPVTTSTQSNST. 2 consecutive repeat copies span residues 3604 to 3662 and 3663 to 3727. Residues 3626–3635 are compositionally biased toward polar residues; sequence PMSTPSEVST. The segment covering 3667–3679 has biased composition (low complexity); the sequence is ITSTQVSSSPVTP. Polar residues-rich tracts occupy residues 3690 to 3701 and 3785 to 3806; these read SEGSTPLTTMPV and MTTA…TMPM. Low complexity-rich tracts occupy residues 3967-3988, 4008-4083, and 4090-4129; these read TSTE…FSTT, STAP…SSTT, and TTMT…TPTV. Residue N4116 is glycosylated (N-linked (GlcNAc...) asparagine). Positions 4131–4170 constitute an EGF-like domain; the sequence is RTTTCFGDGCQNTASRCKNGGTWDGLKCQCPNLYYGELCE. 3 cysteine pairs are disulfide-bonded: C4135-C4147, C4140-C4158, and C4160-C4169. The 108-residue stretch at 4184 to 4291 folds into the SEA domain; it reads ISAQMELTVT…QQIMINDICS (108 aa). Residues N4205, N4236, N4267, N4297, and N4305 are each glycosylated (N-linked (GlcNAc...) asparagine). The helical transmembrane segment at 4394–4414 threads the bilayer; that stretch reads LVGAGVVLMLIILVALLMLVF. Residues 4415–4493 are Cytoplasmic-facing; the sequence is RSKREVKRQK…QRPQVMTTSF (79 aa).

Interacts via its C-terminus with PDZK1 and this interaction appears important for proper localization. Post-translationally, probably cleaved within the SEA domain. N-glycosylated. Contains high mannose and complex-type glycans. The forms containing the complex type glycans localize to the cell surface. Not O-glycosylated. Expressed almost exclusively in the intestine. Expression is especially high in both the duodenum and transverse colon. Expressed in mature absorptive cells of the small intestinal villi. No expression is detected in goblet cells. Highly expressed in pancreatic adenocarcinoma tissue (at protein level). Expression is not detectable in normal pancreas, in pancreatitis or in cell lines derived from other cancers.

The protein localises to the cell membrane. It localises to the secreted. In terms of biological role, probably plays a role in maintaining homeostasis on mucosal surfaces. This Homo sapiens (Human) protein is Mucin-17 (MUC17).